A 100-amino-acid chain; its full sequence is UPF0045 protein MJ1052 (100 aa).

Belongs to the UPF0045 family.

This Methanocaldococcus jannaschii (strain ATCC 43067 / DSM 2661 / JAL-1 / JCM 10045 / NBRC 100440) (Methanococcus jannaschii) protein is UPF0045 protein MJ1052.